Consider the following 166-residue polypeptide: NAD(P)H-quinone oxidoreductase subunit I, chloroplastic (166 aa).

2 4Fe-4S ferredoxin-type domains span residues 55 to 84 (GRIH…VDWQ) and 95 to 124 (VNYS…MTEE). [4Fe-4S] cluster-binding residues include Cys64, Cys67, Cys70, Cys74, Cys104, Cys107, Cys110, and Cys114.

It belongs to the complex I 23 kDa subunit family. In terms of assembly, NDH is composed of at least 16 different subunits, 5 of which are encoded in the nucleus. It depends on [4Fe-4S] cluster as a cofactor.

Its subcellular location is the plastid. The protein resides in the chloroplast thylakoid membrane. The enzyme catalyses a plastoquinone + NADH + (n+1) H(+)(in) = a plastoquinol + NAD(+) + n H(+)(out). It carries out the reaction a plastoquinone + NADPH + (n+1) H(+)(in) = a plastoquinol + NADP(+) + n H(+)(out). Functionally, NDH shuttles electrons from NAD(P)H:plastoquinone, via FMN and iron-sulfur (Fe-S) centers, to quinones in the photosynthetic chain and possibly in a chloroplast respiratory chain. The immediate electron acceptor for the enzyme in this species is believed to be plastoquinone. Couples the redox reaction to proton translocation, and thus conserves the redox energy in a proton gradient. The polypeptide is NAD(P)H-quinone oxidoreductase subunit I, chloroplastic (Coreopsis petrophiloides (Tickseed)).